Consider the following 968-residue polypeptide: Probable transport protein MmpL2 (968 aa).

The next 11 helical transmembrane spans lie at 22–42 (FAVV…LAVP), 204–224 (VIAA…LVLI), 245–265 (IFSL…AAST), 297–317 (AHVI…LSFA), 328–348 (PIAI…PAVL), 378–398 (WPGP…LALP), 763–783 (YDLL…MMII), 787–807 (VVAA…SFGL), 815–835 (ILGI…LLAV), 866–886 (TGGV…LFVF), and 890–910 (RIIG…TLVV).

The protein belongs to the resistance-nodulation-cell division (RND) (TC 2.A.6) family. MmpL subfamily.

It localises to the cell membrane. The polypeptide is Probable transport protein MmpL2 (mmpL2) (Mycobacterium tuberculosis (strain CDC 1551 / Oshkosh)).